Here is a 201-residue protein sequence, read N- to C-terminus: UPF0301 protein RHE_CH00966 (201 aa).

This sequence belongs to the UPF0301 (AlgH) family.

This is UPF0301 protein RHE_CH00966 from Rhizobium etli (strain ATCC 51251 / DSM 11541 / JCM 21823 / NBRC 15573 / CFN 42).